A 733-amino-acid chain; its full sequence is Protein PAT1 homolog 2 (733 aa).

Disordered stretches follow at residues 42-75 (LDQE…PEAL) and 337-366 (LHPQ…PDPY). The span at 49 to 59 (EPVKLEDDHTK) shows a compositional bias: basic and acidic residues. A compositionally biased stretch (low complexity) spans 346–356 (SQRQRPQSSSR).

It belongs to the PAT1 family. As to quaternary structure, interacts with ribonucleoprotein complex components. Interacts with cpeb. Oocyte-specific protein. Expressed throughout oogenesis but is not detectable in eggs, embryos, nor in adult tissues (at protein level).

The protein resides in the cytoplasm. The protein localises to the nucleus. Functionally, RNA-binding protein that acts as a translational repressor. When overexpressed, able to disperse P-bodies. This Xenopus laevis (African clawed frog) protein is Protein PAT1 homolog 2 (patl2).